We begin with the raw amino-acid sequence, 218 residues long: MTGAPSHATFPPAVILAGGLSSRMGRPKAGLVLGGRSMLTRVIERLRPQVAGIAINLNADPDPASAFGLEVVPDTIPGFVGPLAGILAAMRHTVRKSPGASHVLTVPVDTPLFPKSLAARLKTAITSGGEIAVAFSAGEMHPLFALWPVALADDLEAWIHADEKRRVRAFIARHESATVEFPLIPTAAGPLDPFFNINTPEELRQAEAWLPYLEDREP.

GTP-binding positions include 16–18, Lys28, Asn56, Asp74, and Asp109; that span reads LAG. Asp109 contributes to the Mg(2+) binding site.

Belongs to the MobA family. Monomer. The cofactor is Mg(2+).

Its subcellular location is the cytoplasm. It carries out the reaction Mo-molybdopterin + GTP + H(+) = Mo-molybdopterin guanine dinucleotide + diphosphate. Functionally, transfers a GMP moiety from GTP to Mo-molybdopterin (Mo-MPT) cofactor (Moco or molybdenum cofactor) to form Mo-molybdopterin guanine dinucleotide (Mo-MGD) cofactor. This chain is Molybdenum cofactor guanylyltransferase, found in Rhizobium meliloti (strain 1021) (Ensifer meliloti).